The primary structure comprises 306 residues: Polyisoprenyl-teichoic acid--peptidoglycan teichoic acid transferase TagU (306 aa).

Over 1–11 (MRNERRKKKKT) the chain is Cytoplasmic. The chain crosses the membrane as a helical; Signal-anchor for type II membrane protein span at residues 12 to 32 (LLLTILTIIGLLVLGTGGYAY). The Extracellular segment spans residues 33–306 (YLWHKAASTV…TKELKESLEK (274 aa)).

This sequence belongs to the LytR/CpsA/Psr (LCP) family. In terms of assembly, interacts with MreB. Interacts with FloT.

It localises to the cell membrane. The protein resides in the membrane raft. It functions in the pathway cell wall biogenesis. Its function is as follows. May catalyze the final step in cell wall teichoic acid biosynthesis, the transfer of the anionic cell wall polymers (APs) from their lipid-linked precursor to the cell wall peptidoglycan (PG). In Bacillus subtilis (strain 168), this protein is Polyisoprenyl-teichoic acid--peptidoglycan teichoic acid transferase TagU.